The sequence spans 357 residues: UDP-N-acetylglucosamine--N-acetylmuramyl-(pentapeptide) pyrophosphoryl-undecaprenol N-acetylglucosamine transferase (357 aa).

UDP-N-acetyl-alpha-D-glucosamine is bound by residues 15–17 (SGG), Asn-125, Ser-190, and Gln-290.

It belongs to the glycosyltransferase 28 family. MurG subfamily.

It is found in the cell inner membrane. It catalyses the reaction di-trans,octa-cis-undecaprenyl diphospho-N-acetyl-alpha-D-muramoyl-L-alanyl-D-glutamyl-meso-2,6-diaminopimeloyl-D-alanyl-D-alanine + UDP-N-acetyl-alpha-D-glucosamine = di-trans,octa-cis-undecaprenyl diphospho-[N-acetyl-alpha-D-glucosaminyl-(1-&gt;4)]-N-acetyl-alpha-D-muramoyl-L-alanyl-D-glutamyl-meso-2,6-diaminopimeloyl-D-alanyl-D-alanine + UDP + H(+). It participates in cell wall biogenesis; peptidoglycan biosynthesis. Functionally, cell wall formation. Catalyzes the transfer of a GlcNAc subunit on undecaprenyl-pyrophosphoryl-MurNAc-pentapeptide (lipid intermediate I) to form undecaprenyl-pyrophosphoryl-MurNAc-(pentapeptide)GlcNAc (lipid intermediate II). The chain is UDP-N-acetylglucosamine--N-acetylmuramyl-(pentapeptide) pyrophosphoryl-undecaprenol N-acetylglucosamine transferase from Chlamydia pneumoniae (Chlamydophila pneumoniae).